Here is a 485-residue protein sequence, read N- to C-terminus: Anthranilate synthase component I-like protein (485 aa).

L-tryptophan contacts are provided by residues S69 and 271–273; that span reads PFA. 306 to 307 lines the chorismate pocket; sequence GT. Mg(2+) is bound at residue E333. Chorismate is bound by residues R441, 455–457, and G457; that span reads GAG. A Mg(2+)-binding site is contributed by E470.

This sequence belongs to the anthranilate synthase component I family. Tetramer of two components I and two components II. Mg(2+) is required as a cofactor.

It carries out the reaction chorismate + L-glutamine = anthranilate + pyruvate + L-glutamate + H(+). It participates in amino-acid biosynthesis; L-tryptophan biosynthesis; L-tryptophan from chorismate: step 1/5. This is Anthranilate synthase component I-like protein (trpE2) from Synechocystis sp. (strain ATCC 27184 / PCC 6803 / Kazusa).